An 81-amino-acid chain; its full sequence is Large ribosomal subunit protein bL31B (81 aa).

Belongs to the bacterial ribosomal protein bL31 family. Type B subfamily. As to quaternary structure, part of the 50S ribosomal subunit.

The sequence is that of Large ribosomal subunit protein bL31B from Cutibacterium acnes (strain DSM 16379 / KPA171202) (Propionibacterium acnes).